The chain runs to 338 residues: UDP-glucose 4-epimerase (338 aa).

Residues 11–12 (YI), 31–36 (DNLCNS), 58–59 (DI), 80–84 (FAGLK), asparagine 99, serine 124, tyrosine 149, lysine 153, and phenylalanine 178 contribute to the NAD(+) site. Positions 124 and 149 each coordinate substrate. Tyrosine 149 acts as the Proton acceptor in catalysis. Substrate is bound by residues asparagine 179, 199 to 200 (NL), 216 to 218 (AVF), arginine 231, 292 to 295 (RDGD), and tyrosine 299.

Belongs to the NAD(P)-dependent epimerase/dehydratase family. As to quaternary structure, homodimer. NAD(+) is required as a cofactor.

It carries out the reaction UDP-alpha-D-glucose = UDP-alpha-D-galactose. The protein operates within carbohydrate metabolism; galactose metabolism. Its function is as follows. Involved in the metabolism of galactose. Catalyzes the conversion of UDP-galactose (UDP-Gal) to UDP-glucose (UDP-Glc) through a mechanism involving the transient reduction of NAD. This is UDP-glucose 4-epimerase (galE) from Salmonella typhi.